Here is a 96-residue protein sequence, read N- to C-terminus: Putative pterin-4-alpha-carbinolamine dehydratase (96 aa).

Belongs to the pterin-4-alpha-carbinolamine dehydratase family.

The catalysed reaction is (4aS,6R)-4a-hydroxy-L-erythro-5,6,7,8-tetrahydrobiopterin = (6R)-L-erythro-6,7-dihydrobiopterin + H2O. The protein is Putative pterin-4-alpha-carbinolamine dehydratase of Paraburkholderia phytofirmans (strain DSM 17436 / LMG 22146 / PsJN) (Burkholderia phytofirmans).